Consider the following 358-residue polypeptide: Peptide chain release factor 1 (358 aa).

Gln236 bears the N5-methylglutamine mark.

Belongs to the prokaryotic/mitochondrial release factor family. Post-translationally, methylated by PrmC. Methylation increases the termination efficiency of RF1.

The protein localises to the cytoplasm. Its function is as follows. Peptide chain release factor 1 directs the termination of translation in response to the peptide chain termination codons UAG and UAA. In Corynebacterium aurimucosum (strain ATCC 700975 / DSM 44827 / CIP 107346 / CN-1) (Corynebacterium nigricans), this protein is Peptide chain release factor 1.